Consider the following 878-residue polypeptide: DNA mismatch repair protein MutS (878 aa).

618 to 625 (GPNMGGKS) is a binding site for ATP. Composition is skewed to basic and acidic residues over residues 800–811 (LEEESSRQRAEP) and 863–878 (GADK…ARSR). Disordered stretches follow at residues 800 to 842 (LEEE…PDEL) and 859 to 878 (SGEE…ARSR).

It belongs to the DNA mismatch repair MutS family.

Functionally, this protein is involved in the repair of mismatches in DNA. It is possible that it carries out the mismatch recognition step. This protein has a weak ATPase activity. The sequence is that of DNA mismatch repair protein MutS from Alkalilimnicola ehrlichii (strain ATCC BAA-1101 / DSM 17681 / MLHE-1).